Here is a 314-residue protein sequence, read N- to C-terminus: Probable cell division protein WhiA (314 aa).

The H-T-H motif DNA-binding region spans 274–308; sequence SLKELGEMMSTGKISKSGVNHRLRKLNEMADKLRS.

This sequence belongs to the WhiA family.

In terms of biological role, involved in cell division and chromosome segregation. The protein is Probable cell division protein WhiA of Staphylococcus saprophyticus subsp. saprophyticus (strain ATCC 15305 / DSM 20229 / NCIMB 8711 / NCTC 7292 / S-41).